The sequence spans 320 residues: Cytochrome f (320 aa).

Residues 1–36 form the signal peptide; that stretch reads MKHTNSKQKLKDIINFCQAIFTLCIICLYQANISNS. Positions 37, 57, 60, and 61 each coordinate heme. Residues 286–305 traverse the membrane as a helical segment; that stretch reads LISFIFFSISVLISQLFFVL.

This sequence belongs to the cytochrome f family. In terms of assembly, the 4 large subunits of the cytochrome b6-f complex are cytochrome b6, subunit IV (17 kDa polypeptide, petD), cytochrome f and the Rieske protein, while the 4 small subunits are PetG, PetL, PetM and PetN. The complex functions as a dimer. It depends on heme as a cofactor.

It is found in the plastid. Its subcellular location is the chloroplast thylakoid membrane. Component of the cytochrome b6-f complex, which mediates electron transfer between photosystem II (PSII) and photosystem I (PSI), cyclic electron flow around PSI, and state transitions. In Cyanidium caldarium (Red alga), this protein is Cytochrome f (petA).